A 331-amino-acid chain; its full sequence is Protein REVEILLE 6 (331 aa).

The HTH myb-type domain maps to 67-121 (TITKSRESWTEPEHDKFLEALQLFDRDWKKIEAFIGSKTVIQIRSHAQKYFLKVQ). Residues 94 to 117 (WKKIEAFIGSKTVIQIRSHAQKYF) constitute a DNA-binding region (H-T-H motif). Disordered regions lie at residues 122-166 (KSGT…EPND), 203-237 (LPKAGAGANNNCSSSSENTPRPRSNRDARDHGNVG), and 309-331 (SETATDHGGVNKTLNKDPPEIST). The segment covering 150–165 (VQLQVPGSFKSTSEPN) has biased composition (polar residues). Positions 211 to 220 (NNNCSSSSEN) are enriched in low complexity. 2 stretches are compositionally biased toward basic and acidic residues: residues 226 to 235 (SNRDARDHGN) and 322 to 331 (LNKDPPEIST).

Its subcellular location is the nucleus. Its function is as follows. Probable transcription factor. RVE4, RVE6 and RVE8 are components of the circadian system acting synergistically to regulate flowering time, redundantly to regulate leaf growth, and antagonistically to regulate hypocotyl elongation; their action seems independent of ZTL and HY5. This Arabidopsis thaliana (Mouse-ear cress) protein is Protein REVEILLE 6.